We begin with the raw amino-acid sequence, 384 residues long: tRNA-specific 2-thiouridylase MnmA (384 aa).

ATP is bound by residues 13-20 and Met-39; that span reads GLSGGVDS. The interval 99-101 is interaction with target base in tRNA; it reads NPD. Cys-104 (nucleophile) is an active-site residue. Cysteines 104 and 215 form a disulfide. Position 128 (Gly-128) interacts with ATP. Residues 165–167 form an interaction with tRNA region; that stretch reads KDQ. The active-site Cysteine persulfide intermediate is Cys-215. The segment at 333-334 is interaction with tRNA; that stretch reads RY.

This sequence belongs to the MnmA/TRMU family.

The protein resides in the cytoplasm. The enzyme catalyses S-sulfanyl-L-cysteinyl-[protein] + uridine(34) in tRNA + AH2 + ATP = 2-thiouridine(34) in tRNA + L-cysteinyl-[protein] + A + AMP + diphosphate + H(+). Functionally, catalyzes the 2-thiolation of uridine at the wobble position (U34) of tRNA, leading to the formation of s(2)U34. The protein is tRNA-specific 2-thiouridylase MnmA of Albidiferax ferrireducens (strain ATCC BAA-621 / DSM 15236 / T118) (Rhodoferax ferrireducens).